The sequence spans 513 residues: V-type proton ATPase subunit B (513 aa).

R375 lines the ATP pocket. The span at 484–503 (ADRKGKGKDKPTTKDTRDTA) shows a compositional bias: basic and acidic residues. The disordered stretch occupies residues 484 to 513 (ADRKGKGKDKPTTKDTRDTAAPEEENLIDA). Residues 504–513 (APEEENLIDA) are compositionally biased toward acidic residues.

The protein belongs to the ATPase alpha/beta chains family. V-ATPase is a heteromultimeric enzyme composed of a peripheral catalytic V1 complex (components A to H) attached to an integral membrane V0 proton pore complex (components: a, c, c', c'', d, e, f and VOA1).

Its subcellular location is the vacuole membrane. Functionally, non-catalytic subunit of the V1 complex of vacuolar(H+)-ATPase (V-ATPase), a multisubunit enzyme composed of a peripheral complex (V1) that hydrolyzes ATP and a membrane integral complex (V0) that translocates protons. V-ATPase is responsible for acidifying and maintaining the pH of intracellular compartments. The chain is V-type proton ATPase subunit B from Neurospora crassa (strain ATCC 24698 / 74-OR23-1A / CBS 708.71 / DSM 1257 / FGSC 987).